The sequence spans 442 residues: Glycolipid 2-alpha-mannosyltransferase (442 aa).

Residues 1-11 lie on the Cytoplasmic side of the membrane; sequence MALFLSKRLLR. A helical; Signal-anchor for type II membrane protein membrane pass occupies residues 12 to 30; the sequence is FTVIAGAVIVLLLTLNSNS. Residues 31 to 118 are stem region; the sequence is RTQQYIPSSI…YITPSFANKA (88 aa). Residues 31–442 are Lumenal-facing; that stretch reads RTQQYIPSSI…KPKNWKKFRE (412 aa). The disordered stretch occupies residues 68–95; the sequence is EQSALNSEASEDSEAMDEESKALKAAAE. Positions 85–95 are enriched in basic and acidic residues; the sequence is EESKALKAAAE. Residues 119–442 form a catalytic region; the sequence is GKPKACYVTL…KPKNWKKFRE (324 aa). Asn-197 carries an N-linked (GlcNAc...) asparagine glycan. The active-site Nucleophile is Glu-329.

The protein belongs to the glycosyltransferase 15 family. Requires Mn(2+) as cofactor.

The protein localises to the golgi apparatus membrane. The protein operates within protein modification; protein glycosylation. Mannosyltransferase that transfers an alpha-D-mannosyl residue from GDP-mannose into lipid-linked oligosaccharide, forming an alpha-(1-&gt;2)-D-mannosyl-D-mannose linkage. Required for the attachment of the third mannose residue of O-linked saccharides. This chain is Glycolipid 2-alpha-mannosyltransferase (KRE2), found in Saccharomyces cerevisiae (strain ATCC 204508 / S288c) (Baker's yeast).